Consider the following 452-residue polypeptide: UPF0210 protein CHY_1509 (452 aa).

This sequence belongs to the UPF0210 family. In terms of assembly, homodimer.

The polypeptide is UPF0210 protein CHY_1509 (Carboxydothermus hydrogenoformans (strain ATCC BAA-161 / DSM 6008 / Z-2901)).